A 349-amino-acid polypeptide reads, in one-letter code: Phenylalanine--tRNA ligase alpha subunit (349 aa).

Glu-258 lines the Mg(2+) pocket.

The protein belongs to the class-II aminoacyl-tRNA synthetase family. Phe-tRNA synthetase alpha subunit type 1 subfamily. As to quaternary structure, tetramer of two alpha and two beta subunits. The cofactor is Mg(2+).

The protein localises to the cytoplasm. The enzyme catalyses tRNA(Phe) + L-phenylalanine + ATP = L-phenylalanyl-tRNA(Phe) + AMP + diphosphate + H(+). The sequence is that of Phenylalanine--tRNA ligase alpha subunit from Rickettsia africae (strain ESF-5).